Consider the following 76-residue polypeptide: UPF0248 protein MmarC7_1289 (76 aa).

Belongs to the UPF0248 family.

The polypeptide is UPF0248 protein MmarC7_1289 (Methanococcus maripaludis (strain C7 / ATCC BAA-1331)).